A 155-amino-acid polypeptide reads, in one-letter code: Antitoxin HicB 1 (155 aa).

Positions 99–153 constitute an HTH cro/C1-type domain; that stretch reads MLNAFLDSKLTQIELANRMGVKKQEVTRIFDLRHSTKIDTVGKVASAIGHQLTLS. A DNA-binding region (H-T-H motif) is located at residues 110–129; it reads QIELANRMGVKKQEVTRIFD.

Belongs to the HicB antitoxin family. In terms of assembly, probably forms a complex with the probable mRNA interferase HicA1 (its cognate toxin); when complexed with HicA 1 inhibits the toxin activity.

In terms of biological role, antitoxin component of a type II toxin-antitoxin (TA) system. Functions as an mRNA interferase antitoxin preventing effects of the HicA 1 toxin. This is Antitoxin HicB 1 (hicB1) from Photorhabdus laumondii subsp. laumondii (strain DSM 15139 / CIP 105565 / TT01) (Photorhabdus luminescens subsp. laumondii).